Reading from the N-terminus, the 147-residue chain is 3-hydroxyacyl-[acyl-carrier-protein] dehydratase FabZ (147 aa).

The active site involves H49.

The protein belongs to the thioester dehydratase family. FabZ subfamily.

It is found in the cytoplasm. The enzyme catalyses a (3R)-hydroxyacyl-[ACP] = a (2E)-enoyl-[ACP] + H2O. Its function is as follows. Involved in unsaturated fatty acids biosynthesis. Catalyzes the dehydration of short chain beta-hydroxyacyl-ACPs and long chain saturated and unsaturated beta-hydroxyacyl-ACPs. This Alkaliphilus metalliredigens (strain QYMF) protein is 3-hydroxyacyl-[acyl-carrier-protein] dehydratase FabZ.